The sequence spans 965 residues: MTMVYSDNTSIITSAGGLMALLDEQERELQVHALLKIYEFIDQLWPEISDDVTKIEVMYEDHSFPERELAALVVSKVYYYLGEYDEALLFALSSGPKFLHDKNSDYKETLIFKCIDMFIHKSAELYKNPKADPLDERLSGVVEGIFQKCYAKNEWRHVLGIAIEAHRLDIIEYILNADKETDLKPYVLELAMTVVLDIEFRNRLLRLLLSSFLTETEPDYFSVGKCVVHLNDASVAAKLLMKLSSQNDDKSLLTAYQLAFDLEDSAPQEFLNSVMDLLPSPSVANSEEDANADSKKEDSSPCGYIIRILSGEQTVKYDREFLYAHNNTDMLILNRTKDSLEARNSVFHNAVTFANAFMNFGTSSDSFFRDNLSWLSKANNWSKFTATAALGVIHRGYYNQAMNILRPYLPEEDAPSSSTYSEGGAFYAMGLIHANHGRGVTEYLREQLKHTEDEIVQYGLLLGIGLTGMASRDETLYESVKTILFNDNAVAGSAAGISMGLIMLGTASSAAIDEMLQYAHETQHEKIIRGLGIGIALIVYGRQQEADGIIKELNNDLDPTLRYAGMFATALAYCGTSNSKIVRDVLHISVSDVNDDVRRAAVCALGFICFKDPNALISTVELLVDSYNPHVRYGSAIALGIACANSGSNAALDLLSRLVEDATDFVRQGAMIAQAMILTQHNDQLNSKVSGIRKHFEQVINEKHEDALAKLGATLAQGIIDAGGRNVTIALQTATGSLKLSAIVGLTVFLQYWYWFPLTHFMSLSFSPTALIGLDKNLNAPKFSFISNVRPKLFAYPPKSVQPTAKTVQKVETAVLSTTVKAQARAKRAEREKASKGSNDDEMKIDKKTTEEKEATPMEMDEEKSQDISINGNSKKEEPKSETLENFTRVVPAQLPYISFNLNGRYYPVRKFTGGVLMLIDRESDKAPDLIELNRDAVPASADTEPGEQEASPPEDFEYPFDDDD.

10 PC repeats span residues 385 to 418 (TATAALGVIHRGYYNQAMNILRPYLPEEDAPSSS), 424 to 457 (GAFYAMGLIHANHGRGVTEYLREQLKHTEDEIVQ), 459 to 493 (GLLLGIGLTGMASRDETLYESVKTILFNDNAVAGS), 494 to 528 (AAGISMGLIMLGTASSAAIDEMLQYAHETQHEKII), 530 to 563 (GLGIGIALIVYGRQQEADGIIKELNNDLDPTLRY), 564 to 599 (AGMFATALAYCGTSNSKIVRDVLHISVSDVNDDVRR), 600 to 632 (AAVCALGFICFKDPNALISTVELLVDSYNPHVR), 634 to 668 (GSAIALGIACANSGSNAALDLLSRLVEDATDFVRQ), 669 to 699 (GAMIAQAMILTQHNDQLNSKVSGIRKHFEQV), and 712 to 744 (GATLAQGIIDAGGRNVTIALQTATGSLKLSAIV). 2 disordered regions span residues 826–883 (AKRA…KSET) and 934–965 (NRDAVPASADTEPGEQEASPPEDFEYPFDDDD). Composition is skewed to basic and acidic residues over residues 827–856 (KRAEREKASKGSNDDEMKIDKKTTEEKEAT) and 874–883 (SKKEEPKSET). The span at 945-965 (EPGEQEASPPEDFEYPFDDDD) shows a compositional bias: acidic residues. Ser-952 bears the Phosphoserine mark.

Belongs to the proteasome subunit S1 family.

In terms of biological role, acts as a regulatory subunit of the 26S proteasome which is involved in the ATP-dependent degradation of ubiquitinated proteins. The protein is 26S proteasome regulatory subunit rpn2 (rpn2) of Schizosaccharomyces pombe (strain 972 / ATCC 24843) (Fission yeast).